Here is a 363-residue protein sequence, read N- to C-terminus: DNA replication and repair protein RecF (363 aa).

An ATP-binding site is contributed by 30-37 (GNNAQGKT).

Belongs to the RecF family.

Its subcellular location is the cytoplasm. The RecF protein is involved in DNA metabolism; it is required for DNA replication and normal SOS inducibility. RecF binds preferentially to single-stranded, linear DNA. It also seems to bind ATP. This is DNA replication and repair protein RecF from Clostridium acetobutylicum (strain ATCC 824 / DSM 792 / JCM 1419 / IAM 19013 / LMG 5710 / NBRC 13948 / NRRL B-527 / VKM B-1787 / 2291 / W).